A 390-amino-acid polypeptide reads, in one-letter code: Probable tRNA sulfurtransferase (390 aa).

The THUMP domain maps to 60 to 162; it reads KQIIDDLKEV…YDCAIVYGHK (103 aa). ATP is bound by residues 180-181, 205-206, Arg264, Gly286, and Gln295; these read LL and TF.

It belongs to the ThiI family.

It is found in the cytoplasm. The enzyme catalyses [ThiI sulfur-carrier protein]-S-sulfanyl-L-cysteine + a uridine in tRNA + 2 reduced [2Fe-2S]-[ferredoxin] + ATP + H(+) = [ThiI sulfur-carrier protein]-L-cysteine + a 4-thiouridine in tRNA + 2 oxidized [2Fe-2S]-[ferredoxin] + AMP + diphosphate. The catalysed reaction is [ThiS sulfur-carrier protein]-C-terminal Gly-Gly-AMP + S-sulfanyl-L-cysteinyl-[cysteine desulfurase] + AH2 = [ThiS sulfur-carrier protein]-C-terminal-Gly-aminoethanethioate + L-cysteinyl-[cysteine desulfurase] + A + AMP + 2 H(+). It participates in cofactor biosynthesis; thiamine diphosphate biosynthesis. In terms of biological role, catalyzes the ATP-dependent transfer of a sulfur to tRNA to produce 4-thiouridine in position 8 of tRNAs, which functions as a near-UV photosensor. Also catalyzes the transfer of sulfur to the sulfur carrier protein ThiS, forming ThiS-thiocarboxylate. This is a step in the synthesis of thiazole, in the thiamine biosynthesis pathway. The sulfur is donated as persulfide by IscS. The polypeptide is Probable tRNA sulfurtransferase (Ureaplasma parvum serovar 3 (strain ATCC 27815 / 27 / NCTC 11736)).